A 232-amino-acid polypeptide reads, in one-letter code: Small ribosomal subunit protein uS3 (232 aa).

The KH type-2 domain occupies 39 to 107 (IRAFLKKKLY…EVNVNIKEER (69 aa)). A disordered region spans residues 212 to 232 (VQPEKTEDDAPKKTRRPRRGK). The span at 213-223 (QPEKTEDDAPK) shows a compositional bias: basic and acidic residues.

It belongs to the universal ribosomal protein uS3 family. In terms of assembly, part of the 30S ribosomal subunit. Forms a tight complex with proteins S10 and S14.

Binds the lower part of the 30S subunit head. Binds mRNA in the 70S ribosome, positioning it for translation. This is Small ribosomal subunit protein uS3 from Campylobacter curvus (strain 525.92).